The chain runs to 286 residues: Probable endonuclease 4 (286 aa).

Residues histidine 71, histidine 111, glutamate 147, aspartate 181, histidine 184, histidine 218, aspartate 231, histidine 233, and glutamate 263 each contribute to the Zn(2+) site.

This sequence belongs to the AP endonuclease 2 family. It depends on Zn(2+) as a cofactor.

It carries out the reaction Endonucleolytic cleavage to 5'-phosphooligonucleotide end-products.. Endonuclease IV plays a role in DNA repair. It cleaves phosphodiester bonds at apurinic or apyrimidinic (AP) sites, generating a 3'-hydroxyl group and a 5'-terminal sugar phosphate. This chain is Probable endonuclease 4, found in Vibrio cholerae serotype O1 (strain ATCC 39541 / Classical Ogawa 395 / O395).